The following is a 498-amino-acid chain: MSNENHEELNDQLIVRREKVDTLREEGIDPFGEKFIRSISPEEIETKFADKSKEELEEAAIEVSVAGRIMTKRVKGKVGFTHIQDRFHQLQIYIRKDAIGEDAYAIFKLADLGDIIGIKGTIFRTNTGELSVKATDFTLLSKSLRPLPDKYHGLKDVEQRYRQRYLDLITNEESQNRFVMRSKILKYTRDYMDSQGFLEVETPVLHTIAGGAAAKPFITHHNALDMELYLRIALELHLKRLIVGGMDKVYEIGRVFRNEGTSTRHNPEFTMLESYAAYEDYEDVMDLVEGLVSTVCKQVNGTTEITYGEYKVDLTPNWRRVHMADVVKEYVGVDFWNVTSDEEARELAKKHDVAITEHMTYGHILNEFFETYVEEKLIQPTFVYGHPVEISPLAKKNKEDERFTDRFELFIVGREHANAFSELNDPIDQRERFEAQMKEREQGNDEAHGMDADFLEALEYGLPPTGGLGIGVDRLVMLLTDAPSIRDILLFPTMKHRD.

Positions 408 and 415 each coordinate Mg(2+).

The protein belongs to the class-II aminoacyl-tRNA synthetase family. In terms of assembly, homodimer. Requires Mg(2+) as cofactor.

It is found in the cytoplasm. The enzyme catalyses tRNA(Lys) + L-lysine + ATP = L-lysyl-tRNA(Lys) + AMP + diphosphate. The sequence is that of Lysine--tRNA ligase from Listeria welshimeri serovar 6b (strain ATCC 35897 / DSM 20650 / CCUG 15529 / CIP 8149 / NCTC 11857 / SLCC 5334 / V8).